The chain runs to 237 residues: 1-(5-phosphoribosyl)-5-[(5-phosphoribosylamino)methylideneamino] imidazole-4-carboxamide isomerase (237 aa).

Asp8 serves as the catalytic Proton acceptor. The active-site Proton donor is the Asp129.

This sequence belongs to the HisA/HisF family.

The protein resides in the cytoplasm. The catalysed reaction is 1-(5-phospho-beta-D-ribosyl)-5-[(5-phospho-beta-D-ribosylamino)methylideneamino]imidazole-4-carboxamide = 5-[(5-phospho-1-deoxy-D-ribulos-1-ylimino)methylamino]-1-(5-phospho-beta-D-ribosyl)imidazole-4-carboxamide. The protein operates within amino-acid biosynthesis; L-histidine biosynthesis; L-histidine from 5-phospho-alpha-D-ribose 1-diphosphate: step 4/9. The chain is 1-(5-phosphoribosyl)-5-[(5-phosphoribosylamino)methylideneamino] imidazole-4-carboxamide isomerase from Clostridium botulinum (strain Alaska E43 / Type E3).